A 715-amino-acid chain; its full sequence is Lactococcin transport/processing ATP-binding protein LcnC-like (715 aa).

Residues 11 to 138 (QVDEMDCGCA…SEWTGISLFL (128 aa)) form the Peptidase C39 domain. The active site involves Cys17. 5 consecutive transmembrane segments (helical) span residues 167-187 (VILNIVIASFIVTLINILGSY), 197-217 (IPNALMGTLGIISVGLLLTYI), 237-257 (LAIDVILSYIRHIFQLPMSFF), 282-302 (TILSLFLDLTIVLMTGLILGL), and 307-327 (LFLLVLLAIPLYIVVIIIFTP). The 283-residue stretch at 168–450 (ILNIVIASFI…IINLQTKLQK (283 aa)) folds into the ABC transmembrane type-1 domain. Positions 482 to 715 (LNMSEISYQY…NGFYAQLYHN (234 aa)) constitute an ABC transporter domain. 515-522 (GISGSGKS) lines the ATP pocket.

Belongs to the ABC transporter superfamily. HlyB family.

The protein resides in the cell membrane. Involved in the export process of a bacteriocin lactococcin. The chain is Lactococcin transport/processing ATP-binding protein LcnC-like (lcnC) from Lactococcus lactis subsp. lactis (strain IL1403) (Streptococcus lactis).